Consider the following 44-residue polypeptide: Thymosin beta-4 (44 aa).

The tract at residues 1–44 (MSDKPDMGEIQKFNKSKLKKTETQEKNPLPSKETIEQEKQAGES) is disordered. The residue at position 2 (Ser-2) is an N-acetylserine. Residue Ser-2 is modified to Phosphoserine. N6-acetyllysine is present on Lys-4. Lys-12 carries the N6-acetyllysine; alternate modification. Lys-12 participates in a covalent cross-link: Glycyl lysine isopeptide (Lys-Gly) (interchain with G-Cter in SUMO2); alternate. Thr-23 bears the Phosphothreonine mark. Lys-26 carries the N6-acetyllysine modification. Residue Ser-31 is modified to Phosphoserine. Residue Lys-32 is modified to N6-acetyllysine. The span at 33–44 (ETIEQEKQAGES) shows a compositional bias: basic and acidic residues. Thr-34 carries the phosphothreonine modification. At Lys-39 the chain carries N6-acetyllysine.

It belongs to the thymosin beta family. As to quaternary structure, identified in a complex composed of ACTA1, COBL, GSN AND TMSB4X. Interacts with SERPINB1. Post-translationally, acSDKP is inactivated by ACE, which removes the dipeptide Lys-Pro from its C-terminus.

It localises to the cytoplasm. The protein localises to the cytoskeleton. Its function is as follows. Plays an important role in the organization of the cytoskeleton. Binds to and sequesters actin monomers (G actin) and therefore inhibits actin polymerization. In terms of biological role, potent inhibitor of bone marrow derived stem cell differentiation. Acts by inhibits the entry of hematopoietic pluripotent stem cells into the S-phase. In Notamacropus eugenii (Tammar wallaby), this protein is Thymosin beta-4 (TMSB4).